The sequence spans 444 residues: UDP-N-acetylmuramoylalanine--D-glutamate ligase (444 aa).

Position 109 to 115 (109 to 115) interacts with ATP; the sequence is GSNGKTT.

It belongs to the MurCDEF family.

Its subcellular location is the cytoplasm. The enzyme catalyses UDP-N-acetyl-alpha-D-muramoyl-L-alanine + D-glutamate + ATP = UDP-N-acetyl-alpha-D-muramoyl-L-alanyl-D-glutamate + ADP + phosphate + H(+). The protein operates within cell wall biogenesis; peptidoglycan biosynthesis. Its function is as follows. Cell wall formation. Catalyzes the addition of glutamate to the nucleotide precursor UDP-N-acetylmuramoyl-L-alanine (UMA). This Bacteroides fragilis (strain ATCC 25285 / DSM 2151 / CCUG 4856 / JCM 11019 / LMG 10263 / NCTC 9343 / Onslow / VPI 2553 / EN-2) protein is UDP-N-acetylmuramoylalanine--D-glutamate ligase.